Here is a 317-residue protein sequence, read N- to C-terminus: MRSYLDFEKPVAELEAKVEELRALSSPDDGVSIADEVQKLEGKAQEALTQLYASLTPWQKTLVARHPARPHFSDFAKGLFTDFTPLAGDRKYGEDEALIGAFARFRGEAVCVLGHEKGSTTETRIRHNFGMARPEGYRKAVRIMELADRFGLPLISLVDTAGAYPGIGAEERGQAEAIARSTDAGLGLGVPNVAVVIGEGGSGGAIAIAAANKVLMLEHAVYSVISPEGAASILWRDTSKAQEAATNMKITAQDLLRFGIVDDIVREPVGGAHRDPKAAIEATGNAIAEAMGSLAGLDADAVRKARRAKFLAIGRTL.

The CoA carboxyltransferase C-terminal domain occupies 39–293 (KLEGKAQEAL…GNAIAEAMGS (255 aa)).

Belongs to the AccA family. Acetyl-CoA carboxylase is a heterohexamer composed of biotin carboxyl carrier protein (AccB), biotin carboxylase (AccC) and two subunits each of ACCase subunit alpha (AccA) and ACCase subunit beta (AccD).

Its subcellular location is the cytoplasm. The enzyme catalyses N(6)-carboxybiotinyl-L-lysyl-[protein] + acetyl-CoA = N(6)-biotinyl-L-lysyl-[protein] + malonyl-CoA. The protein operates within lipid metabolism; malonyl-CoA biosynthesis; malonyl-CoA from acetyl-CoA: step 1/1. Component of the acetyl coenzyme A carboxylase (ACC) complex. First, biotin carboxylase catalyzes the carboxylation of biotin on its carrier protein (BCCP) and then the CO(2) group is transferred by the carboxyltransferase to acetyl-CoA to form malonyl-CoA. This Azorhizobium caulinodans (strain ATCC 43989 / DSM 5975 / JCM 20966 / LMG 6465 / NBRC 14845 / NCIMB 13405 / ORS 571) protein is Acetyl-coenzyme A carboxylase carboxyl transferase subunit alpha.